A 544-amino-acid chain; its full sequence is CTP synthase (544 aa).

Residues M1–L267 are amidoligase domain. S13 is a CTP binding site. S13 is a UTP binding site. S14–I19 provides a ligand contact to ATP. Y54 contributes to the L-glutamine binding site. D71 is a binding site for ATP. Residues D71 and E141 each coordinate Mg(2+). CTP contacts are provided by residues D148 to E150, K188 to Q193, and K224. Residues K188–Q193 and K224 each bind UTP. A Glutamine amidotransferase type-1 domain is found at Y299–D534. G354 is a binding site for L-glutamine. The active-site Nucleophile; for glutamine hydrolysis is the C381. L-glutamine contacts are provided by residues L382–Q385, E405, and R462. Catalysis depends on residues H507 and E509.

The protein belongs to the CTP synthase family. As to quaternary structure, homotetramer.

The enzyme catalyses UTP + L-glutamine + ATP + H2O = CTP + L-glutamate + ADP + phosphate + 2 H(+). The catalysed reaction is L-glutamine + H2O = L-glutamate + NH4(+). It catalyses the reaction UTP + NH4(+) + ATP = CTP + ADP + phosphate + 2 H(+). The protein operates within pyrimidine metabolism; CTP biosynthesis via de novo pathway; CTP from UDP: step 2/2. Its activity is regulated as follows. Allosterically activated by GTP, when glutamine is the substrate; GTP has no effect on the reaction when ammonia is the substrate. The allosteric effector GTP functions by stabilizing the protein conformation that binds the tetrahedral intermediate(s) formed during glutamine hydrolysis. Inhibited by the product CTP, via allosteric rather than competitive inhibition. Catalyzes the ATP-dependent amination of UTP to CTP with either L-glutamine or ammonia as the source of nitrogen. Regulates intracellular CTP levels through interactions with the four ribonucleotide triphosphates. The protein is CTP synthase of Dehalococcoides mccartyi (strain ATCC BAA-2266 / KCTC 15142 / 195) (Dehalococcoides ethenogenes (strain 195)).